The sequence spans 288 residues: Bifunctional protein FolD (288 aa).

Residues 164-166 (GRS), serine 193, and isoleucine 234 each bind NADP(+).

This sequence belongs to the tetrahydrofolate dehydrogenase/cyclohydrolase family. In terms of assembly, homodimer.

It carries out the reaction (6R)-5,10-methylene-5,6,7,8-tetrahydrofolate + NADP(+) = (6R)-5,10-methenyltetrahydrofolate + NADPH. The enzyme catalyses (6R)-5,10-methenyltetrahydrofolate + H2O = (6R)-10-formyltetrahydrofolate + H(+). The protein operates within one-carbon metabolism; tetrahydrofolate interconversion. Catalyzes the oxidation of 5,10-methylenetetrahydrofolate to 5,10-methenyltetrahydrofolate and then the hydrolysis of 5,10-methenyltetrahydrofolate to 10-formyltetrahydrofolate. The chain is Bifunctional protein FolD from Nitratidesulfovibrio vulgaris (strain DSM 19637 / Miyazaki F) (Desulfovibrio vulgaris).